The primary structure comprises 149 residues: Transcriptional repressor NrdR (149 aa).

Residues 3–34 (CPFCAAVDTKVIDSRLVGDGSQVRRRRQCLVC) fold into a zinc finger. One can recognise an ATP-cone domain in the interval 49–139 (PRVIKSDEVR…VYRSFEDIRE (91 aa)).

Belongs to the NrdR family. Zn(2+) is required as a cofactor.

Negatively regulates transcription of bacterial ribonucleotide reductase nrd genes and operons by binding to NrdR-boxes. The chain is Transcriptional repressor NrdR from Serratia proteamaculans (strain 568).